Consider the following 519-residue polypeptide: Sodium-dependent dicarboxylate transporter SdcS (519 aa).

Transmembrane regions (helical) follow at residues 29–49 (VGQL…LLLF), 59–79 (VFVL…AIPI), 103–123 (AQYG…AIAM), 136–156 (IINT…IATG), 159–179 (SMFV…LAII), 201–221 (ALVL…LIGT), 241–261 (FAKW…LVWI), 297–317 (KVVL…EFLL), 322–342 (FTSE…LFLI), 362–382 (LPWG…GISE), 395–415 (LIEG…VLFL), 428–448 (ILPI…LLMV), 451–471 (AMAA…AIVF), and 490–510 (LLSI…VLGI).

It belongs to the SLC13A/DASS transporter (TC 2.A.47) family. NADC subfamily.

The protein resides in the cell membrane. Its function is as follows. Mediates the transport of dicarboxylates across the cytoplasmic membrane via a Na(+)-electrochemical gradient. The protein is Sodium-dependent dicarboxylate transporter SdcS (sdcS) of Staphylococcus saprophyticus subsp. saprophyticus (strain ATCC 15305 / DSM 20229 / NCIMB 8711 / NCTC 7292 / S-41).